We begin with the raw amino-acid sequence, 302 residues long: N-acetyl-D-glucosamine kinase (302 aa).

ATP contacts are provided by residues 4–11 and 133–139; these read GFDIGGTK and GGGGLVL. Zn(2+)-binding residues include His156, Cys176, Cys178, and Cys183.

It belongs to the ROK (NagC/XylR) family. NagK subfamily.

The catalysed reaction is N-acetyl-D-glucosamine + ATP = N-acetyl-D-glucosamine 6-phosphate + ADP + H(+). Its pathway is cell wall biogenesis; peptidoglycan recycling. Functionally, catalyzes the phosphorylation of N-acetyl-D-glucosamine (GlcNAc) derived from cell-wall degradation, yielding GlcNAc-6-P. The sequence is that of N-acetyl-D-glucosamine kinase from Salmonella typhi.